We begin with the raw amino-acid sequence, 368 residues long: Cell division protein FtsZ 1 (368 aa).

GTP is bound by residues 52–56 (GGGCN), 139–141 (GTG), E170, R174, and D217.

The protein belongs to the FtsZ family. In terms of assembly, homodimer. Polymerizes to form a dynamic ring structure in a strictly GTP-dependent manner. Interacts directly with several other division proteins.

Its subcellular location is the cytoplasm. In terms of biological role, essential cell division protein that forms a contractile ring structure (Z ring) at the future cell division site. The regulation of the ring assembly controls the timing and the location of cell division. One of the functions of the FtsZ ring is to recruit other cell division proteins to the septum to produce a new cell wall between the dividing cells. Binds GTP and shows GTPase activity. The chain is Cell division protein FtsZ 1 from Archaeoglobus fulgidus (strain ATCC 49558 / DSM 4304 / JCM 9628 / NBRC 100126 / VC-16).